A 557-amino-acid polypeptide reads, in one-letter code: Dihydroxy-acid dehydratase (557 aa).

Residue Asp78 participates in Mg(2+) binding. Cys119 serves as a coordination point for [2Fe-2S] cluster. Residues Asp120 and Lys121 each coordinate Mg(2+). At Lys121 the chain carries N6-carboxylysine. Position 192 (Cys192) interacts with [2Fe-2S] cluster. Glu442 is a Mg(2+) binding site. Ser468 (proton acceptor) is an active-site residue.

Belongs to the IlvD/Edd family. As to quaternary structure, homodimer. [2Fe-2S] cluster is required as a cofactor. Mg(2+) serves as cofactor.

It carries out the reaction (2R)-2,3-dihydroxy-3-methylbutanoate = 3-methyl-2-oxobutanoate + H2O. The enzyme catalyses (2R,3R)-2,3-dihydroxy-3-methylpentanoate = (S)-3-methyl-2-oxopentanoate + H2O. It participates in amino-acid biosynthesis; L-isoleucine biosynthesis; L-isoleucine from 2-oxobutanoate: step 3/4. The protein operates within amino-acid biosynthesis; L-valine biosynthesis; L-valine from pyruvate: step 3/4. In terms of biological role, functions in the biosynthesis of branched-chain amino acids. Catalyzes the dehydration of (2R,3R)-2,3-dihydroxy-3-methylpentanoate (2,3-dihydroxy-3-methylvalerate) into 2-oxo-3-methylpentanoate (2-oxo-3-methylvalerate) and of (2R)-2,3-dihydroxy-3-methylbutanoate (2,3-dihydroxyisovalerate) into 2-oxo-3-methylbutanoate (2-oxoisovalerate), the penultimate precursor to L-isoleucine and L-valine, respectively. The protein is Dihydroxy-acid dehydratase of Bacillus cereus (strain G9842).